A 362-amino-acid polypeptide reads, in one-letter code: Mitochondrial glycine transporter (362 aa).

Solcar repeat units follow at residues 22 to 108, 132 to 236, and 269 to 354; these read PDAT…MRTS, LTAM…FKND, and RSSI…LIKS. The next 6 helical transmembrane spans lie at 28–53, 83–109, 138–163, 211–234, 273–299, and 329–347; these read LLAG…TRLQ, GTLP…RTSW, LTTG…TRFE, GSVA…EAFK, INST…KTRL, and GLSL…SWCI.

This sequence belongs to the mitochondrial carrier (TC 2.A.29) family. SLC25A38 subfamily.

It is found in the mitochondrion inner membrane. It catalyses the reaction glycine(in) = glycine(out). In terms of biological role, mitochondrial glycine transporter that imports glycine into the mitochondrial matrix. Plays an important role in providing glycine for the first enzymatic step in heme biosynthesis, the condensation of glycine with succinyl-CoA to produce 5-aminolevulinate (ALA) in the mitochondrial matrix. The chain is Mitochondrial glycine transporter from Candida albicans (strain SC5314 / ATCC MYA-2876) (Yeast).